A 114-amino-acid polypeptide reads, in one-letter code: Large ribosomal subunit protein bL19 (114 aa).

This sequence belongs to the bacterial ribosomal protein bL19 family.

Functionally, this protein is located at the 30S-50S ribosomal subunit interface and may play a role in the structure and function of the aminoacyl-tRNA binding site. The polypeptide is Large ribosomal subunit protein bL19 (Clostridium acetobutylicum (strain ATCC 824 / DSM 792 / JCM 1419 / IAM 19013 / LMG 5710 / NBRC 13948 / NRRL B-527 / VKM B-1787 / 2291 / W)).